A 101-amino-acid polypeptide reads, in one-letter code: Signal recognition particle 19 kDa protein (101 aa).

It belongs to the SRP19 family. Part of the signal recognition particle protein translocation system, which is composed of SRP and FtsY. Archaeal SRP consists of a 7S RNA molecule of 300 nucleotides and two protein subunits: SRP54 and SRP19.

The protein localises to the cytoplasm. Its function is as follows. Involved in targeting and insertion of nascent membrane proteins into the cytoplasmic membrane. Binds directly to 7S RNA and mediates binding of the 54 kDa subunit of the SRP. This is Signal recognition particle 19 kDa protein from Thermofilum pendens (strain DSM 2475 / Hrk 5).